The chain runs to 448 residues: Na(+)-malate symporter (448 aa).

Transmembrane regions (helical) follow at residues 31-51 (IGVIPLPLYTVLAVIIILAAY), 60-80 (LGGFAIIMILGVFLGDIGQRI), 86-106 (IGGPAILSLFVPSFLVFYNVL), 123-143 (FLYFYIACLVVGSILGMNRIV), 153-173 (VPLVAGTIAAVAAGILVGFIF), 182-202 (FFVVVPIIAGGIGEGILPLSI), 214-234 (VFVSQLVPAAIIGNVFAIICA), 276-293 (LMGAGVLLACTFFIFGGL), 297-319 (FIFIPGAILMIISAAAVKYANIL), 333-353 (FISSSFTWPLMVGLGILFIPL), and 359-379 (VISIPFVIICISVVIAMIGSG).

This sequence belongs to the 2-hydroxycarboxylate transporter (2-HCT) (TC 2.A.24) family.

It is found in the cell membrane. Acts as a Na(+)-malate symporter, as it catalyzes malate-dependent uptake of Na(+) and Na(+)-dependent uptake of malate. The sequence is that of Na(+)-malate symporter from Bacillus subtilis (strain 168).